Here is a 131-residue protein sequence, read N- to C-terminus: MARAGPEYREWNSELIKPKKLLNPVKASRSHQELHRELLMNHKRGLGMDRKPELQRVLEHRRRNQLIKKKEEELEAKRMQCPFEQELLRRQQRLNQLENPPQREEDHAPEFIKVRENLRRITTLTSEERAL.

A coiled-coil region spans residues Val57–Lys77. The Nuclear localization signal motif lies at Arg61–Glu71.

Interacts with ACTB. Interacts with COMMD1; this interaction stabilizes COMMD1 in the nucleus. Interacts with MAP1A. Interacts with PRDX1. Interacts with F-actin.

It localises to the nucleus. Its subcellular location is the cytoplasm. The protein resides in the cytoskeleton. The protein localises to the stress fiber. It is found in the cell junction. It localises to the focal adhesion. Its subcellular location is the cell projection. The protein resides in the ruffle membrane. The protein localises to the synapse. Stress-inducible actin-binding protein that plays a role in synaptic and cognitive functions by modulating actin filamentous (F-actin) dynamics. Mediates polymerization of globular actin to F-actin. Also binds to, stabilizes and bundles F-actin. Involved in synaptic function by regulating neurite outgrowth in an actin-dependent manner and for the acquisition of hippocampus-dependent cognitive function, such as learning and long-term memory. Plays a role in the actin and microtubule cytoskeleton organization; negatively regulates focal adhesion (FA) assembly promoting malignant glial cell migration in an actin-, microtubule- and MAP1A-dependent manner. Also involved in neuroblastoma G1/S phase cell cycle progression and cell proliferation inhibition by stimulating ubiquitination of NF-kappa-B subunit RELA and NF-kappa-B degradation in a COMMD1- and actin-dependent manner. May play a role in tumor development. This Rattus norvegicus (Rat) protein is Actin-associated protein FAM107A.